We begin with the raw amino-acid sequence, 273 residues long: Zinc finger protein 80 (273 aa).

2 consecutive C2H2-type zinc fingers follow at residues tyrosine 49–histidine 71 and tyrosine 77–histidine 99. The C2H2-type 3; atypical zinc-finger motif lies at cysteine 105–histidine 127. C2H2-type zinc fingers lie at residues tyrosine 133–histidine 155, phenylalanine 161–histidine 183, tyrosine 189–histidine 211, and tyrosine 217–histidine 239.

The protein belongs to the krueppel C2H2-type zinc-finger protein family.

It is found in the nucleus. Functionally, may be involved in transcriptional regulation. The chain is Zinc finger protein 80 (ZNF80) from Gorilla gorilla gorilla (Western lowland gorilla).